Consider the following 76-residue polypeptide: uORF2 protein (76 aa).

Plays a role in viral replication. This chain is uORF2 protein, found in Homo sapiens (Human).